The chain runs to 90 residues: Putative defensin-like protein 64 (90 aa).

The signal sequence occupies residues 1–23 (MWGRQIVLKIFFLVLSCVIVIET). 2 disulfide bridges follow: C33-C56 and C42-C77.

This sequence belongs to the DEFL family.

It localises to the secreted. This Arabidopsis thaliana (Mouse-ear cress) protein is Putative defensin-like protein 64.